We begin with the raw amino-acid sequence, 120 residues long: uncharacterized protein (120 aa).

Residues 8–28 (LIVKWFVGLMLIMMMVAVSLF) traverse the membrane as a helical segment.

It is found in the membrane. This is an uncharacterized protein from Bacillus anthracis.